Consider the following 207-residue polypeptide: FMN-dependent NADH:quinone oxidoreductase (207 aa).

FMN is bound by residues serine 10, 16–18 (SIS), 96–99 (MYNL), and 141–144 (SRGG).

Belongs to the azoreductase type 1 family. In terms of assembly, homodimer. FMN is required as a cofactor.

It carries out the reaction 2 a quinone + NADH + H(+) = 2 a 1,4-benzosemiquinone + NAD(+). The catalysed reaction is N,N-dimethyl-1,4-phenylenediamine + anthranilate + 2 NAD(+) = 2-(4-dimethylaminophenyl)diazenylbenzoate + 2 NADH + 2 H(+). In terms of biological role, quinone reductase that provides resistance to thiol-specific stress caused by electrophilic quinones. Functionally, also exhibits azoreductase activity. Catalyzes the reductive cleavage of the azo bond in aromatic azo compounds to the corresponding amines. This chain is FMN-dependent NADH:quinone oxidoreductase, found in Nostoc sp. (strain PCC 7120 / SAG 25.82 / UTEX 2576).